A 148-amino-acid chain; its full sequence is Small ribosomal subunit protein uS13 (148 aa).

It belongs to the universal ribosomal protein uS13 family. In terms of assembly, part of the 30S ribosomal subunit. Forms a loose heterodimer with protein S19. Forms two bridges to the 50S subunit in the 70S ribosome.

In terms of biological role, located at the top of the head of the 30S subunit, it contacts several helices of the 16S rRNA. In the 70S ribosome it contacts the 23S rRNA (bridge B1a) and protein L5 of the 50S subunit (bridge B1b), connecting the 2 subunits; these bridges are implicated in subunit movement. This chain is Small ribosomal subunit protein uS13, found in Pyrococcus abyssi (strain GE5 / Orsay).